Here is a 282-residue protein sequence, read N- to C-terminus: Putative 1-acyl-sn-glycerol-3-phosphate acyltransferase acl-2 (282 aa).

The next 2 membrane-spanning stretches (helical) occupy residues 4-24 (FWSI…NIST) and 32-52 (ISFY…TMIP). Residues 98–103 (HQSSLD) carry the HXXXXD motif motif. Residues 122–142 (ILAYVPFFNLGAYFSNTIFID) traverse the membrane as a helical segment.

Belongs to the 1-acyl-sn-glycerol-3-phosphate acyltransferase family.

It is found in the membrane. The catalysed reaction is a 1-acyl-sn-glycero-3-phosphate + an acyl-CoA = a 1,2-diacyl-sn-glycero-3-phosphate + CoA. The protein operates within phospholipid metabolism; CDP-diacylglycerol biosynthesis; CDP-diacylglycerol from sn-glycerol 3-phosphate: step 2/3. Functionally, converts lysophosphatidic acid (LPA) into phosphatidic acid by incorporating an acyl moiety at the sn-2 position of the glycerol backbone. The protein is Putative 1-acyl-sn-glycerol-3-phosphate acyltransferase acl-2 (acl-2) of Caenorhabditis elegans.